The chain runs to 445 residues: Phosphoglucosamine mutase (445 aa).

The active-site Phosphoserine intermediate is Ser102. Mg(2+) is bound by residues Ser102, Asp241, Asp243, and Asp245. Ser102 is subject to Phosphoserine.

It belongs to the phosphohexose mutase family. It depends on Mg(2+) as a cofactor. Activated by phosphorylation.

It catalyses the reaction alpha-D-glucosamine 1-phosphate = D-glucosamine 6-phosphate. Its function is as follows. Catalyzes the conversion of glucosamine-6-phosphate to glucosamine-1-phosphate. This is Phosphoglucosamine mutase from Pectobacterium carotovorum subsp. carotovorum (strain PC1).